We begin with the raw amino-acid sequence, 89 residues long: Co-chaperonin GroES (89 aa).

It belongs to the GroES chaperonin family. In terms of assembly, heptamer of 7 subunits arranged in a ring. Interacts with the chaperonin GroEL.

The protein resides in the cytoplasm. Functionally, together with the chaperonin GroEL, plays an essential role in assisting protein folding. The GroEL-GroES system forms a nano-cage that allows encapsulation of the non-native substrate proteins and provides a physical environment optimized to promote and accelerate protein folding. GroES binds to the apical surface of the GroEL ring, thereby capping the opening of the GroEL channel. In Pseudothermotoga lettingae (strain ATCC BAA-301 / DSM 14385 / NBRC 107922 / TMO) (Thermotoga lettingae), this protein is Co-chaperonin GroES.